The primary structure comprises 302 residues: tRNA pseudouridine synthase B (302 aa).

The Nucleophile role is filled by Asp43.

It belongs to the pseudouridine synthase TruB family. Type 1 subfamily.

It carries out the reaction uridine(55) in tRNA = pseudouridine(55) in tRNA. Its function is as follows. Responsible for synthesis of pseudouridine from uracil-55 in the psi GC loop of transfer RNAs. The polypeptide is tRNA pseudouridine synthase B (Burkholderia pseudomallei (strain 668)).